Consider the following 262-residue polypeptide: Demethyldecarbamoylnovobiocin O-methyltransferase (262 aa).

64 to 65 (TM) is a binding site for S-adenosyl-L-methionine. The active-site Proton acceptor is glutamate 72. S-adenosyl-L-methionine contacts are provided by residues 92–96 (ETGVW), 122–126 (DSFQG), phenylalanine 178, 196–197 (DG), and serine 202. Aspartate 196 lines the Mg(2+) pocket. The Mg(2+) site is built by aspartate 223 and aspartate 224.

Belongs to the methyltransferase TylF/MycF family. In terms of assembly, homodimer. The cofactor is Mg(2+).

The catalysed reaction is desmethyldescarbamoylnovobiocin + S-adenosyl-L-methionine = descarbamoylnovobiocin + S-adenosyl-L-homocysteine + H(+). It participates in antibiotic biosynthesis; novobiocin biosynthesis. S-adenosyl-L-methionine-dependent O-methyltransferase that methylates at 4-OH of the noviose moiety, the penultimate step in the novobiocin biosynthesis pathway. Novobiocin is an aminocoumarin family antibiotic that targets bacterial DNA gyrases. This chain is Demethyldecarbamoylnovobiocin O-methyltransferase (novP), found in Streptomyces niveus (Streptomyces spheroides).